The primary structure comprises 207 residues: Thymidylate kinase (207 aa).

7–14 is an ATP binding site; it reads GPEGAGKS.

It belongs to the thymidylate kinase family.

It catalyses the reaction dTMP + ATP = dTDP + ADP. In terms of biological role, phosphorylation of dTMP to form dTDP in both de novo and salvage pathways of dTTP synthesis. This Pseudomonas putida (strain W619) protein is Thymidylate kinase.